Consider the following 196-residue polypeptide: Imidazole glycerol phosphate synthase subunit HisH (196 aa).

The 195-residue stretch at 2–196 folds into the Glutamine amidotransferase type-1 domain; sequence KVAVIKYNAG…ERIIKNFLEL (195 aa). The Nucleophile role is filled by Cys-77. Active-site residues include His-178 and Glu-180.

As to quaternary structure, heterodimer of HisH and HisF.

Its subcellular location is the cytoplasm. The catalysed reaction is 5-[(5-phospho-1-deoxy-D-ribulos-1-ylimino)methylamino]-1-(5-phospho-beta-D-ribosyl)imidazole-4-carboxamide + L-glutamine = D-erythro-1-(imidazol-4-yl)glycerol 3-phosphate + 5-amino-1-(5-phospho-beta-D-ribosyl)imidazole-4-carboxamide + L-glutamate + H(+). It carries out the reaction L-glutamine + H2O = L-glutamate + NH4(+). The protein operates within amino-acid biosynthesis; L-histidine biosynthesis; L-histidine from 5-phospho-alpha-D-ribose 1-diphosphate: step 5/9. Functionally, IGPS catalyzes the conversion of PRFAR and glutamine to IGP, AICAR and glutamate. The HisH subunit catalyzes the hydrolysis of glutamine to glutamate and ammonia as part of the synthesis of IGP and AICAR. The resulting ammonia molecule is channeled to the active site of HisF. This chain is Imidazole glycerol phosphate synthase subunit HisH, found in Bacteroides fragilis (strain YCH46).